A 129-amino-acid polypeptide reads, in one-letter code: MPTYNQLVRFKRKSKVRKTKSPALEANPFKSGVCLVVKTVTPKKPNSALRKVATVRLSNKRTVNVYIPGEKHSVKEHDRVLVRGGQVPDLPGVKYHVVLGAYDIAGVKGRKQGRSRYGAPRKQVVATKK.

Aspartate 89 carries the 3-methylthioaspartic acid modification. The disordered stretch occupies residues 110 to 129; the sequence is RKQGRSRYGAPRKQVVATKK.

It belongs to the universal ribosomal protein uS12 family. In terms of assembly, part of the 30S ribosomal subunit. Contacts proteins S8 and S17. May interact with IF1 in the 30S initiation complex.

With S4 and S5 plays an important role in translational accuracy. Its function is as follows. Interacts with and stabilizes bases of the 16S rRNA that are involved in tRNA selection in the A site and with the mRNA backbone. Located at the interface of the 30S and 50S subunits, it traverses the body of the 30S subunit contacting proteins on the other side and probably holding the rRNA structure together. The combined cluster of proteins S8, S12 and S17 appears to hold together the shoulder and platform of the 30S subunit. The sequence is that of Small ribosomal subunit protein uS12 from Rickettsia bellii (strain OSU 85-389).